The primary structure comprises 268 residues: Tryptophan synthase alpha chain (268 aa).

Active-site proton acceptor residues include E49 and D60.

The protein belongs to the TrpA family. Tetramer of two alpha and two beta chains.

The catalysed reaction is (1S,2R)-1-C-(indol-3-yl)glycerol 3-phosphate + L-serine = D-glyceraldehyde 3-phosphate + L-tryptophan + H2O. It functions in the pathway amino-acid biosynthesis; L-tryptophan biosynthesis; L-tryptophan from chorismate: step 5/5. The alpha subunit is responsible for the aldol cleavage of indoleglycerol phosphate to indole and glyceraldehyde 3-phosphate. The polypeptide is Tryptophan synthase alpha chain (Xanthomonas axonopodis pv. citri (strain 306)).